The following is a 477-amino-acid chain: ACT domain-containing protein ACR1 (477 aa).

ACT domains lie at 38 to 124 (LIKV…REVQ), 134 to 214 (AFEI…GDVS), 283 to 358 (MVNV…RASQ), and 361 to 441 (KLEI…MMPR). The short motif at 329 to 345 (KKNGGTLETEGQRERLR) is the Bipartite nuclear localization signal element.

Expressed in flowers and siliques.

Its subcellular location is the nucleus. In terms of biological role, may bind amino acids. The polypeptide is ACT domain-containing protein ACR1 (Arabidopsis thaliana (Mouse-ear cress)).